Consider the following 581-residue polypeptide: Phosphatidylinositol N-acetylglucosaminyltransferase subunit Q (581 aa).

A run of 5 helical transmembrane segments spans residues 276–298 (ANML…WLHS), 344–366 (LGRF…SPFI), 381–403 (LTVA…YCFY), 446–468 (LFIG…LYYL), and 478–500 (ITVQ…YSLG).

The protein belongs to the PIGQ family. In terms of assembly, component of the glycosylphosphatidylinositol-N-acetylglucosaminyltransferase (GPI-GnT) complex composed at least by PIGA, PIGC, PIGH, PIGP, PIGQ, PIGY and DPM2. Interacts with PIGA, PIGH and PIGC.

Its subcellular location is the membrane. It functions in the pathway glycolipid biosynthesis; glycosylphosphatidylinositol-anchor biosynthesis. Part of the glycosylphosphatidylinositol-N-acetylglucosaminyltransferase (GPI-GnT) complex that catalyzes the transfer of N-acetylglucosamine from UDP-N-acetylglucosamine to phosphatidylinositol and participates in the first step of GPI biosynthesis. This Mus musculus (Mouse) protein is Phosphatidylinositol N-acetylglucosaminyltransferase subunit Q.